A 333-amino-acid polypeptide reads, in one-letter code: Trans-enoyl reductase apdC (333 aa).

Residue 45–48 coordinates NADP(+); sequence FDAK. 131 to 138 contacts substrate; the sequence is VGLATVGM. Residues 167-170, Tyr-185, and 232-233 each bind NADP(+); these read SPHN and LD. Substrate is bound at residue 252-256; that stretch reads SVTMY. Residue 321–322 coordinates NADP(+); sequence VS.

The protein belongs to the zinc-containing alcohol dehydrogenase family. In terms of assembly, monomer.

It participates in secondary metabolite biosynthesis. Trans-enoyl reductase; part of the gene cluster that mediates the biosynthesis of aspyridones. The polyketide-amino acid backbone preaspyridone A is first assembled by the PKS-NRPS hybrid apdA. The assembly of preaspyridone A is initiated by loading of malonyl-CoA onto apdA, followed by decarboxylation to yield the acetyl starter unit. The growing polyketide chain then elongates into a tetraketide. The adpA PKS module catalyzes three Claisen condensations, as well as beta-keto processing and methylation. Alpha-methylation step during polyketide synthesis is a prerequisite and a key checkpoint for chain transfer between PKS and NRPS modules. The downstream NRPS module contains the condensation (C), adenylation (A), and thiolation (T) domains and catalyzes the incorporation of tyrosine via the formation of the L-tyrosinyl-thioester and the amide linkage between L-tyrosinyl-thioester and the tetraketide. The bimodular assembly line is terminated with a reductase (R) domain that facilitates formation and release of the tetramic acid product. Because apdA lacks a designated enoylreductase (ER) domain, the required activity is provided the enoyl reductase apdC. ApdC appears to operate with different stereoselectivity in different PKS cycle. Combined with apdC, apdA is proposed to synthesize preaspyridone A via about 20 enzymatic steps. A number of oxidative steps performed successively by the cytochrome P450 monooxygenases apdE and apdB are required for the conversion of preaspyridone A to aspyridone A. The cytochrome P450 monooxygenase apdE is responsible for the oxidative dephenylation of preaspyridone A. Finally, the predicted FAD-dependent monooxygenase apdD and the acyl-CoA dehydrogenase apdG may be involved in the transformation of aspyridone A into aspyridone B. This Emericella nidulans (strain FGSC A4 / ATCC 38163 / CBS 112.46 / NRRL 194 / M139) (Aspergillus nidulans) protein is Trans-enoyl reductase apdC.